The sequence spans 484 residues: Zinc metalloproteinase-disintegrin BlatH1 (484 aa).

Positions 1 to 20 (MIQVLLVTICLAALPYQGSS) are cleaved as a signal peptide. Residues 21–190 (IILESGNVND…KKASQSNLTP (170 aa)) constitute a propeptide that is removed on maturation. Residue E191 is modified to Pyrrolidone carboxylic acid (Glu). A Peptidase M12B domain is found at 199 to 395 (KYVELVIVAD…QNSQCILNEP (197 aa)). E202 lines the Ca(2+) pocket. Residue N259 is glycosylated (N-linked (GlcNAc...) asparagine). D286 serves as a coordination point for Ca(2+). N297 is a glycosylation site (N-linked (GlcNAc...) asparagine). Cystine bridges form between C310–C390, C350–C374, and C352–C357. H335 provides a ligand contact to Zn(2+). Residue E336 is part of the active site. H339 and H345 together coordinate Zn(2+). An N-linked (GlcNAc...) asparagine glycan is attached at N373. Ca(2+) contacts are provided by C390, N393, V405, N408, E412, E415, and D418. Positions 403–484 (PPVCGNEILE…GQSADCPSNG (82 aa)) constitute a Disintegrin domain. 7 cysteine pairs are disulfide-bonded: C406-C425, C417-C435, C419-C430, C429-C452, C443-C449, C448-C473, and C461-C480. A TDN-tripeptide motif is present at residues 465 to 467 (TDN).

The protein belongs to the venom metalloproteinase (M12B) family. P-II subfamily. P-IIc sub-subfamily. Homodimer. Zn(2+) serves as cofactor. Post-translationally, the N-terminus is blocked. Expressed by the venom gland.

Its subcellular location is the secreted. With respect to regulation, platelet aggregation in inhibited by the metalloproteinase inhibitors EDTA and Batimastat. The hemorrhagic activity is not inhibited by the plasma proteinase inhibitor alpha2-macroglobulin, although the SVMP is able to cleave this plasma inhibitor, generating a 90 kDa product. Functionally, snake venom zinc metalloprotease-disintegrin that hydrolyzes azocasein, gelatin and fibrinogen (Aalpha and Bbeta chains and partially gamma-chain), and exerts a potent local and systemic hemorrhagic activity in mice. It inhibits ADP- and collagen-induced human platelet aggregation (IC(50) = 0.3 uM and 0.7 uM for ADP and collagen, respectively). This inhibition is dependent of protease activity, and probably occurs through the degradation of an unknown platelet receptor. This chain is Zinc metalloproteinase-disintegrin BlatH1, found in Bothriechis lateralis (Side-striped palm pitviper).